Reading from the N-terminus, the 349-residue chain is MCAVLPQPKCVKLRALHSSCKFGVAARSCQELLRKGCIRFQLPVPGSRLCMYEDGTEVTDDCFPSLPNDSELLLLTAGETWHGYVSDITRLLSVFNEPHAGVIQAARQLLSDEQAPLRQKLLADLLHHVSQNITAETREQDPSWFEGLESRFRNKSGYLRYSCESRIRGYLREVSAYISMVDAAAREEYLRVLSSMCHKLKSVQYNGSYFDRGAEASSRLCTPEGWFSCQGPFDLESCLSKHSINPYGNRESRILFSTWNLDHIIEKKRTVVPTLAEAIQDGREVNWEYFYSLLFTAENLKLVHIACHKKTTHKLQCDRSRIYRPQTGSRRKQPPRKQPPRKRPPRKRQ.

The CIDE-N domain maps to 7 to 83 (QPKCVKLRAL…LLTAGETWHG (77 aa)). Residues 319 to 349 (RSRIYRPQTGSRRKQPPRKQPPRKRPPRKRQ) form a disordered region. Over residues 329-349 (SRRKQPPRKQPPRKRPPRKRQ) the composition is skewed to basic residues.

In terms of assembly, heterodimer of DFFA and DFFB. Interacts with H1-1.

The protein localises to the cytoplasm. Its subcellular location is the nucleus. Its activity is regulated as follows. Inhibited by DFFA (DFF45). In terms of biological role, nuclease that induces DNA fragmentation and chromatin condensation during apoptosis. Degrades naked DNA and induces apoptotic morphology. The polypeptide is DNA fragmentation factor subunit beta (Dffb) (Rattus norvegicus (Rat)).